The following is a 106-amino-acid chain: Iron-sulfur cluster assembly protein CyaY (106 aa).

The protein belongs to the frataxin family.

Involved in iron-sulfur (Fe-S) cluster assembly. May act as a regulator of Fe-S biogenesis. This is Iron-sulfur cluster assembly protein CyaY from Salmonella paratyphi B (strain ATCC BAA-1250 / SPB7).